We begin with the raw amino-acid sequence, 320 residues long: o-succinylbenzoate synthase (320 aa).

Residue Lys-133 is the Proton donor of the active site. The Mg(2+) site is built by Asp-161, Glu-190, and Asp-213. Catalysis depends on Lys-235, which acts as the Proton acceptor.

This sequence belongs to the mandelate racemase/muconate lactonizing enzyme family. MenC type 1 subfamily. Requires a divalent metal cation as cofactor.

It carries out the reaction (1R,6R)-6-hydroxy-2-succinyl-cyclohexa-2,4-diene-1-carboxylate = 2-succinylbenzoate + H2O. It participates in quinol/quinone metabolism; 1,4-dihydroxy-2-naphthoate biosynthesis; 1,4-dihydroxy-2-naphthoate from chorismate: step 4/7. The protein operates within quinol/quinone metabolism; menaquinone biosynthesis. In terms of biological role, converts 2-succinyl-6-hydroxy-2,4-cyclohexadiene-1-carboxylate (SHCHC) to 2-succinylbenzoate (OSB). This is o-succinylbenzoate synthase from Escherichia coli (strain K12 / MC4100 / BW2952).